The chain runs to 827 residues: Multiple RNA-binding domain-containing protein 1 (827 aa).

One can recognise an RRM 1 domain in the interval 5-78 (SRIFVKNLPP…SRISVDIAKP (74 aa)). Disordered stretches follow at residues 77-116 (KPIADSKPQHKSPSKGSSKDADPKNAPKVLPPNTKVTAAA), 176-230 (AGLE…ATDD), and 256-299 (AASG…DPES). Residues 179–189 (EDGESDDEYED) show a composition bias toward acidic residues. 2 stretches are compositionally biased toward low complexity: residues 208-225 (APLAASAEPSESAPPVSL) and 256-270 (AASGSAAVSVPSTSV). The span at 277–288 (KPEEHPAEDSRE) shows a compositional bias: basic and acidic residues. RRM domains lie at 308–384 (SRLF…PAAA), 489–560 (TTIL…KGPK), 599–682 (SSLF…ASHR), and 704–781 (TKLV…FAQA).

The protein belongs to the RRM MRD1 family.

The protein resides in the nucleus. Its function is as follows. Involved in pre-rRNA processing. This Neurospora crassa (strain ATCC 24698 / 74-OR23-1A / CBS 708.71 / DSM 1257 / FGSC 987) protein is Multiple RNA-binding domain-containing protein 1 (mrd-1).